Consider the following 430-residue polypeptide: Asparagine--tRNA ligase (430 aa).

Belongs to the class-II aminoacyl-tRNA synthetase family. Homodimer.

The protein resides in the cytoplasm. The catalysed reaction is tRNA(Asn) + L-asparagine + ATP = L-asparaginyl-tRNA(Asn) + AMP + diphosphate + H(+). The chain is Asparagine--tRNA ligase from Staphylococcus aureus (strain JH1).